The chain runs to 294 residues: Fructose-bisphosphate aldolase class 1 (294 aa).

E176 functions as the Proton acceptor in the catalytic mechanism. K213 functions as the Schiff-base intermediate with dihydroxyacetone-P in the catalytic mechanism.

This sequence belongs to the class I fructose-bisphosphate aldolase family.

It carries out the reaction beta-D-fructose 1,6-bisphosphate = D-glyceraldehyde 3-phosphate + dihydroxyacetone phosphate. The protein operates within carbohydrate degradation; glycolysis; D-glyceraldehyde 3-phosphate and glycerone phosphate from D-glucose: step 4/4. This chain is Fructose-bisphosphate aldolase class 1, found in Oceanobacillus iheyensis (strain DSM 14371 / CIP 107618 / JCM 11309 / KCTC 3954 / HTE831).